The primary structure comprises 197 residues: Protein shisa-4 (197 aa).

A signal peptide spans 1–27; that stretch reads MPPAGPRGTAPLAAVVLLVLGAPLALA. At 28–87 the chain is on the extracellular side; that stretch reads SEDCLWYLDRNGSWHPGFDCEFFTFCCGTCYQRYCCRDLTLLITERQQKHCLAFSPKTIA. Residues 88-108 form a helical membrane-spanning segment; the sequence is GIASAVILFVAVVATTICCFL. Residues 109–197 are Cytoplasmic-facing; the sequence is CSCCYLYRRR…MPPQPSYPGA (89 aa).

Belongs to the shisa family.

It localises to the membrane. In Mus musculus (Mouse), this protein is Protein shisa-4 (Shisa4).